Here is a 314-residue protein sequence, read N- to C-terminus: Glycine--tRNA ligase alpha subunit (314 aa).

Belongs to the class-II aminoacyl-tRNA synthetase family. As to quaternary structure, tetramer of two alpha and two beta subunits.

It is found in the cytoplasm. The catalysed reaction is tRNA(Gly) + glycine + ATP = glycyl-tRNA(Gly) + AMP + diphosphate. This Leuconostoc citreum (strain KM20) protein is Glycine--tRNA ligase alpha subunit.